The sequence spans 264 residues: Undecaprenyl-diphosphatase (264 aa).

7 helical membrane passes run 38 to 58 (RSDF…VLVF), 75 to 95 (REYV…GLVV), 106 to 126 (VSPV…VEAY), 136 to 156 (VTWT…VFPG), 181 to 201 (FVFL…FLEM), 217 to 237 (VAFL…MGYI), and 242 to 262 (FTAF…WLPS).

The protein belongs to the UppP family.

The protein localises to the cell membrane. The enzyme catalyses di-trans,octa-cis-undecaprenyl diphosphate + H2O = di-trans,octa-cis-undecaprenyl phosphate + phosphate + H(+). Functionally, catalyzes the dephosphorylation of undecaprenyl diphosphate (UPP). Confers resistance to bacitracin. The sequence is that of Undecaprenyl-diphosphatase from Stenotrophomonas maltophilia (strain K279a).